The primary structure comprises 172 residues: 3-hydroxydecanoyl-[acyl-carrier-protein] dehydratase (172 aa).

Residue H71 is part of the active site.

The protein belongs to the thioester dehydratase family. FabA subfamily. In terms of assembly, homodimer.

The protein localises to the cytoplasm. The enzyme catalyses a (3R)-hydroxyacyl-[ACP] = a (2E)-enoyl-[ACP] + H2O. It catalyses the reaction (3R)-hydroxydecanoyl-[ACP] = (2E)-decenoyl-[ACP] + H2O. It carries out the reaction (2E)-decenoyl-[ACP] = (3Z)-decenoyl-[ACP]. Its pathway is lipid metabolism; fatty acid biosynthesis. Functionally, necessary for the introduction of cis unsaturation into fatty acids. Catalyzes the dehydration of (3R)-3-hydroxydecanoyl-ACP to E-(2)-decenoyl-ACP and then its isomerization to Z-(3)-decenoyl-ACP. Can catalyze the dehydratase reaction for beta-hydroxyacyl-ACPs with saturated chain lengths up to 16:0, being most active on intermediate chain length. The polypeptide is 3-hydroxydecanoyl-[acyl-carrier-protein] dehydratase (Escherichia coli (strain 55989 / EAEC)).